The following is a 1222-amino-acid chain: A disintegrin and metalloproteinase with thrombospondin motifs 16 (1222 aa).

A signal peptide spans 1-20; that stretch reads MESRGCAALWVLLLAQVSEQ. A propeptide spanning residues 21-277 is cleaved from the precursor; that stretch reads QTPACALGLA…EYKPSSRHKR (257 aa). N-linked (GlcNAc...) asparagine glycosylation is found at N154 and N190. Residues 245 to 253 carry the Cysteine switch motif; sequence HFCGRRKKY. A Zn(2+)-binding site is contributed by C247. In terms of domain architecture, Peptidase M12B spans 288 to 493; it reads LNVETLVVVD…AQAICLADQP (206 aa). N-linked (GlcNAc...) asparagine glycosylation occurs at N308. Disulfide bonds link C364-C415, C390-C397, C409-C488, C448-C472, C516-C541, C527-C548, C536-C567, C561-C572, C596-C633, C600-C638, and C611-C623. Residue H431 coordinates Zn(2+). E432 is a catalytic residue. Zn(2+)-binding residues include H435 and H441. One can recognise a Disintegrin domain in the interval 494–583; the sequence is KPVKEYKYPE…KYGDEGPKPT (90 aa). A TSP type-1 1 domain is found at 584–639; that stretch reads HGHWSDWSPWSPCSRTCGGGISHRDRLCTNPRPSHGGKFCQGSTRTLKLCNSQRCP. N-linked (GlcNAc...) asparagine glycans are attached at residues N739, N778, N825, N833, N903, and N933. Positions 745–871 are spacer; it reads THRGLYSKHH…KTPAAQPSYS (127 aa). 5 TSP type-1 domains span residues 872 to 920, 925 to 985, 986 to 1046, 1049 to 1113, and 1125 to 1179; these read WAIV…LVPC, CPSS…QSCP, PAWS…KRCH, KKLQ…IPCP, and RGSW…HFCP. One can recognise a PLAC domain in the interval 1184–1221; that stretch reads RGTFCKDLFHWCYLVPQHGMCGHRFYSKQCCNTCSKSN.

Requires Zn(2+) as cofactor. Post-translationally, the precursor is cleaved by a furin endopeptidase. Glycosylated. Can be O-fucosylated by POFUT2 on a serine or a threonine residue found within the consensus sequence C1-X(2)-(S/T)-C2-G of the TSP type-1 repeat domains where C1 and C2 are the first and second cysteine residue of the repeat, respectively. Fucosylated repeats can then be further glycosylated by the addition of a beta-1,3-glucose residue by the glucosyltransferase, B3GALTL. Fucosylation mediates the efficient secretion of ADAMTS family members. Can also be C-glycosylated with one or two mannose molecules on tryptophan residues within the consensus sequence W-X-X-W of the TPRs, and N-glycosylated. These other glycosylations can also facilitate secretion.

The protein localises to the secreted. The protein resides in the extracellular space. Its subcellular location is the extracellular matrix. The protein is A disintegrin and metalloproteinase with thrombospondin motifs 16 (Adamts16) of Mus musculus (Mouse).